We begin with the raw amino-acid sequence, 643 residues long: 1-deoxy-D-xylulose-5-phosphate synthase (643 aa).

Thiamine diphosphate contacts are provided by residues His-71 and 112 to 114; that span reads SHA. Residue Asp-144 participates in Mg(2+) binding. Residues 145 to 146, Asn-173, Tyr-284, and Glu-365 each bind thiamine diphosphate; that span reads GA. Asn-173 lines the Mg(2+) pocket.

Belongs to the transketolase family. DXPS subfamily. As to quaternary structure, homodimer. Mg(2+) serves as cofactor. It depends on thiamine diphosphate as a cofactor.

The enzyme catalyses D-glyceraldehyde 3-phosphate + pyruvate + H(+) = 1-deoxy-D-xylulose 5-phosphate + CO2. The protein operates within metabolic intermediate biosynthesis; 1-deoxy-D-xylulose 5-phosphate biosynthesis; 1-deoxy-D-xylulose 5-phosphate from D-glyceraldehyde 3-phosphate and pyruvate: step 1/1. Its function is as follows. Catalyzes the acyloin condensation reaction between C atoms 2 and 3 of pyruvate and glyceraldehyde 3-phosphate to yield 1-deoxy-D-xylulose-5-phosphate (DXP). In Mycobacterium leprae (strain Br4923), this protein is 1-deoxy-D-xylulose-5-phosphate synthase.